Reading from the N-terminus, the 186-residue chain is tRNA (cytidine(56)-2'-O)-methyltransferase (186 aa).

Residues leucine 84 and 110–114 (GAEKV) each bind S-adenosyl-L-methionine.

The protein belongs to the aTrm56 family. In terms of assembly, homodimer.

Its subcellular location is the cytoplasm. It catalyses the reaction cytidine(56) in tRNA + S-adenosyl-L-methionine = 2'-O-methylcytidine(56) in tRNA + S-adenosyl-L-homocysteine + H(+). Its function is as follows. Specifically catalyzes the AdoMet-dependent 2'-O-ribose methylation of cytidine at position 56 in tRNAs. The sequence is that of tRNA (cytidine(56)-2'-O)-methyltransferase from Staphylothermus marinus (strain ATCC 43588 / DSM 3639 / JCM 9404 / F1).